Consider the following 470-residue polypeptide: 3-isopropylmalate dehydratase large subunit (470 aa).

[4Fe-4S] cluster is bound by residues Cys348, Cys409, and Cys412.

This sequence belongs to the aconitase/IPM isomerase family. LeuC type 1 subfamily. As to quaternary structure, heterodimer of LeuC and LeuD. [4Fe-4S] cluster serves as cofactor.

It catalyses the reaction (2R,3S)-3-isopropylmalate = (2S)-2-isopropylmalate. The protein operates within amino-acid biosynthesis; L-leucine biosynthesis; L-leucine from 3-methyl-2-oxobutanoate: step 2/4. Functionally, catalyzes the isomerization between 2-isopropylmalate and 3-isopropylmalate, via the formation of 2-isopropylmaleate. This chain is 3-isopropylmalate dehydratase large subunit, found in Acidithiobacillus ferrooxidans (strain ATCC 23270 / DSM 14882 / CIP 104768 / NCIMB 8455) (Ferrobacillus ferrooxidans (strain ATCC 23270)).